Here is an 843-residue protein sequence, read N- to C-terminus: Protein P (843 aa).

The segment at Met-1–Gln-177 is terminal protein domain (TP). The spacer stretch occupies residues Glu-178–Leu-346. 2 disordered regions span residues Lys-228–Ala-255 and Glu-284–Ser-314. Over residues Arg-239–Thr-249 the composition is skewed to basic residues. The segment at Glu-347–Gln-690 is polymerase/reverse transcriptase domain (RT). The Reverse transcriptase domain occupies Glu-357–Ile-600. The Mg(2+) site is built by Asp-429, Asp-551, and Asp-552.

It belongs to the hepadnaviridae P protein family.

The enzyme catalyses DNA(n) + a 2'-deoxyribonucleoside 5'-triphosphate = DNA(n+1) + diphosphate. It carries out the reaction Endonucleolytic cleavage to 5'-phosphomonoester.. Its activity is regulated as follows. Activated by host HSP70 and HSP40 in vitro to be able to bind the epsilon loop of the pgRNA. Because deletion of the RNase H region renders the protein partly chaperone-independent, the chaperones may be needed indirectly to relieve occlusion of the RNA-binding site by this domain. Inhibited by several reverse-transcriptase inhibitors: Lamivudine, Adefovir and Entecavir. Multifunctional enzyme that converts the viral RNA genome into dsDNA in viral cytoplasmic capsids. This enzyme displays a DNA polymerase activity that can copy either DNA or RNA templates, and a ribonuclease H (RNase H) activity that cleaves the RNA strand of RNA-DNA heteroduplexes in a partially processive 3'- to 5'-endonucleasic mode. Neo-synthesized pregenomic RNA (pgRNA) are encapsidated together with the P protein, and reverse-transcribed inside the nucleocapsid. Initiation of reverse-transcription occurs first by binding the epsilon loop on the pgRNA genome, and is initiated by protein priming, thereby the 5'-end of (-)DNA is covalently linked to P protein. Partial (+)DNA is synthesized from the (-)DNA template and generates the relaxed circular DNA (RC-DNA) genome. After budding and infection, the RC-DNA migrates in the nucleus, and is converted into a plasmid-like covalently closed circular DNA (cccDNA). The activity of P protein does not seem to be necessary for cccDNA generation, and is presumably released from (+)DNA by host nuclear DNA repair machinery. This Hepatitis B virus genotype F2 subtype adw4q (isolate Senegal/9203) (HBV-F) protein is Protein P.